A 304-amino-acid chain; its full sequence is Non-specific ribonucleoside hydrolase RihC (304 aa).

The active site involves His-233.

It belongs to the IUNH family. RihC subfamily.

Hydrolyzes both purine and pyrimidine ribonucleosides with a broad-substrate specificity. This is Non-specific ribonucleoside hydrolase RihC from Escherichia fergusonii (strain ATCC 35469 / DSM 13698 / CCUG 18766 / IAM 14443 / JCM 21226 / LMG 7866 / NBRC 102419 / NCTC 12128 / CDC 0568-73).